A 94-amino-acid polypeptide reads, in one-letter code: DNA-directed RNA polymerase subunit omega (94 aa).

It belongs to the RNA polymerase subunit omega family. The RNAP catalytic core consists of 2 alpha, 1 beta, 1 beta' and 1 omega subunit. When a sigma factor is associated with the core the holoenzyme is formed, which can initiate transcription.

The enzyme catalyses RNA(n) + a ribonucleoside 5'-triphosphate = RNA(n+1) + diphosphate. Its function is as follows. Promotes RNA polymerase assembly. Latches the N- and C-terminal regions of the beta' subunit thereby facilitating its interaction with the beta and alpha subunits. The chain is DNA-directed RNA polymerase subunit omega from Frankia alni (strain DSM 45986 / CECT 9034 / ACN14a).